The chain runs to 638 residues: Dihydrolipoyllysine-residue acetyltransferase component of pyruvate dehydrogenase complex (638 aa).

Lipoyl-binding domains follow at residues S2–E74 and S117–R191. K40 bears the N6-lipoyllysine mark. Low complexity predominate over residues P90–S117. The disordered stretch occupies residues P90–E119. K157 is modified (N6-lipoyllysine). The disordered stretch occupies residues A201–A220. Positions P222–R296 constitute a Lipoyl-binding 3 domain. The residue at position 262 (K262) is an N6-lipoyllysine. Residues A301–A320 show a composition bias toward low complexity. The disordered stretch occupies residues A301–K336. The region spanning H338 to V375 is the Peripheral subunit-binding (PSBD) domain. Residues A382 to L638 form a catalytic region. H611 is an active-site residue.

Belongs to the 2-oxoacid dehydrogenase family. As to quaternary structure, forms a 24-polypeptide structural core with octahedral symmetry. It depends on (R)-lipoate as a cofactor.

It carries out the reaction N(6)-[(R)-dihydrolipoyl]-L-lysyl-[protein] + acetyl-CoA = N(6)-[(R)-S(8)-acetyldihydrolipoyl]-L-lysyl-[protein] + CoA. Its function is as follows. The pyruvate dehydrogenase complex catalyzes the overall conversion of pyruvate to acetyl-CoA and CO(2). It contains multiple copies of three enzymatic components: pyruvate dehydrogenase (E1), dihydrolipoamide acetyltransferase (E2) and lipoamide dehydrogenase (E3). The protein is Dihydrolipoyllysine-residue acetyltransferase component of pyruvate dehydrogenase complex of Azotobacter vinelandii.